Here is a 281-residue protein sequence, read N- to C-terminus: Transmembrane protein 163 (281 aa).

Residues methionine 1–alanine 80 lie on the Cytoplasmic side of the membrane. The interval isoleucine 16–methionine 44 is disordered. The helical transmembrane segment at leucine 81–valine 101 threads the bilayer. At serine 102–alanine 108 the chain is on the extracellular side. The helical transmembrane segment at serine 109–tryptophan 129 threads the bilayer. The Cytoplasmic segment spans residues arginine 130–methionine 145. Residues alanine 146–isoleucine 166 form a helical membrane-spanning segment. Residues histidine 167–glycine 179 are Extracellular-facing. The chain crosses the membrane as a helical span at residues phenylalanine 180 to phenylalanine 200. Topologically, residues methionine 201–arginine 209 are cytoplasmic. Residues alanine 210–leucine 230 form a helical membrane-spanning segment. Residues serine 231–lysine 240 lie on the Extracellular side of the membrane. A helical transmembrane segment spans residues valine 241 to isoleucine 261. Residues lysine 262–glutamate 281 lie on the Cytoplasmic side of the membrane.

Belongs to the TMEM163 family.

The protein localises to the cytoplasmic vesicle. It is found in the secretory vesicle. The protein resides in the synaptic vesicle membrane. Its subcellular location is the early endosome membrane. In terms of biological role, may bind zinc and other divalent cations and recruit them to vesicular organelles. In Xenopus laevis (African clawed frog), this protein is Transmembrane protein 163 (tmem163).